Consider the following 302-residue polypeptide: Olfactory receptor 51H1 (302 aa).

Residues 1-27 (MTNLNASQANHRNFILTGIPGTPDKNP) are Extracellular-facing. A glycan (N-linked (GlcNAc...) asparagine) is linked at Asn-5. A helical membrane pass occupies residues 28-48 (WLAFPLGFLYTLTLLGNGTIL). The Cytoplasmic portion of the chain corresponds to 49–56 (AVIKVEPS). Residues 57 to 77 (LHEPTYYFLSILALTDVSLSM) form a helical membrane-spanning segment. Residues 78–101 (STLPSMLSIYWFNAPQIVFDACIM) are Extracellular-facing. Cys-99 and Cys-191 form a disulfide bridge. Residues 102 to 122 (QMFFIHVFGIVESGVLVSMAF) form a helical membrane-spanning segment. Topologically, residues 123-141 (DRFVAIRNPLHYVSILTHD) are cytoplasmic. The chain crosses the membrane as a helical span at residues 142-162 (VIRKTGIAVLTRAVCVVFPVP). At 163–198 (FLIKCLPFCHSNVLSHSYCLHQNMMRLACASTRINS) the chain is on the extracellular side. Residues 199-219 (LYGLIVVIFTLGLDVLLTLLS) traverse the membrane as a helical segment. The Cytoplasmic segment spans residues 220–239 (YVLTLKTVLGIVSRGERLKT). The helical transmembrane segment at 240–260 (LSTCLSHMSTVLLFYVPFMGA) threads the bilayer. Residues 261 to 276 (ASMIHRFWEHLSPVVH) are Extracellular-facing. Residues 277-297 (MVMADIYLLLPPVLNPIVYSV) traverse the membrane as a helical segment. Residues 298–302 (KTKQI) lie on the Cytoplasmic side of the membrane.

It belongs to the G-protein coupled receptor 1 family.

It is found in the cell membrane. In terms of biological role, odorant receptor. The chain is Olfactory receptor 51H1 (OR51H1) from Homo sapiens (Human).